We begin with the raw amino-acid sequence, 495 residues long: 3-octaprenyl-4-hydroxybenzoate carboxy-lyase (495 aa).

N171 serves as a coordination point for Mn(2+). Prenylated FMN contacts are provided by residues 174–176 (IYR), 188–190 (RWL), and 193–194 (RG). E237 provides a ligand contact to Mn(2+). Residue D286 is the Proton donor of the active site.

This sequence belongs to the UbiD family. As to quaternary structure, homohexamer. It depends on prenylated FMN as a cofactor. Mn(2+) is required as a cofactor.

The protein localises to the cell membrane. The catalysed reaction is a 4-hydroxy-3-(all-trans-polyprenyl)benzoate + H(+) = a 2-(all-trans-polyprenyl)phenol + CO2. It functions in the pathway cofactor biosynthesis; ubiquinone biosynthesis. Catalyzes the decarboxylation of 3-octaprenyl-4-hydroxy benzoate to 2-octaprenylphenol, an intermediate step in ubiquinone biosynthesis. The protein is 3-octaprenyl-4-hydroxybenzoate carboxy-lyase of Hamiltonella defensa subsp. Acyrthosiphon pisum (strain 5AT).